We begin with the raw amino-acid sequence, 464 residues long: Arylsulfatase (464 aa).

A signal peptide spans 1-20; sequence MNKKAMAAAVSMILAGGAHA. The Ca(2+) site is built by Asp-34, Asp-35, and Ser-72. Ser-72 acts as the Nucleophile in catalysis. The residue at position 72 (Ser-72) is a 3-oxoalanine (Ser). His-134 is an active-site residue. Positions 329 and 330 each coordinate Ca(2+).

This sequence belongs to the sulfatase family. It depends on Ca(2+) as a cofactor. The conversion to 3-oxoalanine (also known as C-formylglycine, FGly), of a serine or cysteine residue in prokaryotes and of a cysteine residue in eukaryotes, is critical for catalytic activity.

It localises to the periplasm. The enzyme catalyses an aryl sulfate + H2O = a phenol + sulfate + H(+). Functionally, plays an important role in the mineralization of sulfates. The chain is Arylsulfatase (atsA) from Klebsiella aerogenes (Enterobacter aerogenes).